Consider the following 244-residue polypeptide: Putative ABC transporter ATP-binding protein gll0289 (244 aa).

An ABC transporter domain is found at 5 to 237; the sequence is LVVEELHYSY…RVLLETHGLE (233 aa). 38–45 provides a ligand contact to ATP; that stretch reads GPNGSGKS.

This sequence belongs to the ABC transporter superfamily.

It is found in the cell inner membrane. Its function is as follows. Probably part of an ABC transporter complex. Responsible for energy coupling to the transport system. The polypeptide is Putative ABC transporter ATP-binding protein gll0289 (Gloeobacter violaceus (strain ATCC 29082 / PCC 7421)).